Consider the following 116-residue polypeptide: Sperm mitochondrial-associated cysteine-rich protein (116 aa).

A run of 7 repeats spans residues 6-13 (KHSKCCPA), 14-21 (KGNQCCPP), 30-37 (KGNQCCPP), 38-45 (KQNQCCQP), 46-53 (KGSQCCPP), 54-61 (KHNHCCQP), and 62-68 (KPPCCIQ). A 7 X 7 (OR 8) AA approximate repeats region spans residues 6-68 (KHSKCCPAKG…CQPKPPCCIQ (63 aa)). The segment at 80-116 (VSPLNMESEPNSPQTQDKGCQTQQQPHSPQNESRPSK) is disordered. A compositionally biased stretch (low complexity) spans 93–104 (QTQDKGCQTQQQ). A compositionally biased stretch (polar residues) spans 105–116 (PHSPQNESRPSK).

As to expression, testis. Is selectively expressed in the spermatids of seminiferous tubules.

It localises to the cytoplasm. Its subcellular location is the mitochondrion membrane. Its function is as follows. Involved in sperm motility. Its absence is associated with genetic background dependent male infertility. Infertility may be due to reduced sperm motility in the female reproductive tract and inability to penetrate the oocyte zona pellucida. In Homo sapiens (Human), this protein is Sperm mitochondrial-associated cysteine-rich protein (SMCP).